The sequence spans 229 residues: Lipoprotein-releasing system ATP-binding protein LolD (229 aa).

The ABC transporter domain occupies Leu-9–Ala-229. Ala-45–Ser-52 contacts ATP.

The protein belongs to the ABC transporter superfamily. Lipoprotein translocase (TC 3.A.1.125) family. The complex is composed of two ATP-binding proteins (LolD) and two transmembrane proteins (LolC and LolE).

Its subcellular location is the cell inner membrane. In terms of biological role, part of the ABC transporter complex LolCDE involved in the translocation of mature outer membrane-directed lipoproteins, from the inner membrane to the periplasmic chaperone, LolA. Responsible for the formation of the LolA-lipoprotein complex in an ATP-dependent manner. The protein is Lipoprotein-releasing system ATP-binding protein LolD of Granulibacter bethesdensis (strain ATCC BAA-1260 / CGDNIH1).